The sequence spans 378 residues: UDP-N-acetylglucosamine 2-epimerase (378 aa).

The active site involves histidine 214.

It belongs to the UDP-N-acetylglucosamine 2-epimerase family.

The enzyme catalyses UDP-N-acetyl-alpha-D-glucosamine = UDP-N-acetyl-alpha-D-mannosamine. It functions in the pathway bacterial outer membrane biogenesis; LPS O-antigen biosynthesis. The protein is UDP-N-acetylglucosamine 2-epimerase (rfbC) of Salmonella borreze.